Consider the following 651-residue polypeptide: Cysteine-rich receptor-like protein kinase 42 (651 aa).

Positions 1–28 (MRCLTKTRSFHYVIIFYSFFFLPFLSSS) are cleaved as a signal peptide. Topologically, residues 29-251 (SDDQRTTVSG…HHKFHVLFNK (223 aa)) are extracellular. Gnk2-homologous domains are found at residues 35–135 (TVSG…TYEF) and 137–236 (DESV…DHKF). Asn-79 and Asn-151 each carry an N-linked (GlcNAc...) asparagine glycan. A helical transmembrane segment spans residues 252 to 272 (GVIVAIVLTTSAFVMLILLAT). Topologically, residues 273–651 (YVIMTKVSKT…SSESSTTRTI (379 aa)) are cytoplasmic. The Protein kinase domain maps to 315 to 604 (FSHKKMLGQG…IPSPTSPPFL (290 aa)). Residues 321–329 (LGQGGNGTV) and Lys-343 each bind ATP. Tyr-388 bears the Phosphotyrosine mark. The active-site Proton acceptor is the Asp-440. Phosphoserine is present on residues Ser-444 and Ser-473. Phosphothreonine is present on residues Thr-474 and Thr-479. The residue at position 487 (Tyr-487) is a Phosphotyrosine.

The protein belongs to the protein kinase superfamily. Ser/Thr protein kinase family. CRK subfamily.

It is found in the membrane. It carries out the reaction L-seryl-[protein] + ATP = O-phospho-L-seryl-[protein] + ADP + H(+). It catalyses the reaction L-threonyl-[protein] + ATP = O-phospho-L-threonyl-[protein] + ADP + H(+). The protein is Cysteine-rich receptor-like protein kinase 42 (CRK42) of Arabidopsis thaliana (Mouse-ear cress).